The sequence spans 324 residues: DNA repair and recombination protein RadA (324 aa).

114 to 121 contributes to the ATP binding site; the sequence is GEFGSGKT.

Belongs to the eukaryotic RecA-like protein family.

Functionally, involved in DNA repair and in homologous recombination. Binds and assemble on single-stranded DNA to form a nucleoprotein filament. Hydrolyzes ATP in a ssDNA-dependent manner and promotes DNA strand exchange between homologous DNA molecules. This Saccharolobus islandicus (strain Y.N.15.51 / Yellowstone #2) (Sulfolobus islandicus) protein is DNA repair and recombination protein RadA.